The primary structure comprises 152 residues: Xanthine-guanine phosphoribosyltransferase (152 aa).

Residues 37–38 (RG), Arg-69, and 88–96 (DDLVDTGGT) contribute to the 5-phospho-alpha-D-ribose 1-diphosphate site. Position 69 (Arg-69) interacts with GMP. Residue Asp-89 coordinates Mg(2+). Guanine-binding residues include Asp-92 and Ile-135. 2 residues coordinate xanthine: Asp-92 and Ile-135. GMP-binding positions include 92 to 96 (DTGGT) and 134 to 135 (WI).

The protein belongs to the purine/pyrimidine phosphoribosyltransferase family. XGPT subfamily. As to quaternary structure, homotetramer. Mg(2+) serves as cofactor.

Its subcellular location is the cell inner membrane. The enzyme catalyses GMP + diphosphate = guanine + 5-phospho-alpha-D-ribose 1-diphosphate. It carries out the reaction XMP + diphosphate = xanthine + 5-phospho-alpha-D-ribose 1-diphosphate. It catalyses the reaction IMP + diphosphate = hypoxanthine + 5-phospho-alpha-D-ribose 1-diphosphate. It functions in the pathway purine metabolism; GMP biosynthesis via salvage pathway; GMP from guanine: step 1/1. It participates in purine metabolism; XMP biosynthesis via salvage pathway; XMP from xanthine: step 1/1. Purine salvage pathway enzyme that catalyzes the transfer of the ribosyl-5-phosphate group from 5-phospho-alpha-D-ribose 1-diphosphate (PRPP) to the N9 position of the 6-oxopurines guanine and xanthine to form the corresponding ribonucleotides GMP (guanosine 5'-monophosphate) and XMP (xanthosine 5'-monophosphate), with the release of PPi. To a lesser extent, also acts on hypoxanthine. The protein is Xanthine-guanine phosphoribosyltransferase of Escherichia fergusonii (strain ATCC 35469 / DSM 13698 / CCUG 18766 / IAM 14443 / JCM 21226 / LMG 7866 / NBRC 102419 / NCTC 12128 / CDC 0568-73).